The sequence spans 376 residues: MYTLLKKTGKVRRGRFETVHGTIETPVFMNVGTLAAIKGAVSSMDLKEINCQVELSNTYHLSLRPGDDVVKKLGGLHKFMNWDRPILTDSGGFQVFSLAEIRKIKEEGVYFNSHIDGRKIFMGPEESMKIQSNLASTIAMAFDECVENPSPREYVERSVERTTRWLVRCKEELDRLNSLPDTINKKQMLFGINQGGVYDDIRIEHAKTIAKMDLDGYAIGGLAVGETHEEMYRIIDAVVPHLPQDKPIYLMGVGTPSNILEAVSRGVDFFDCVLPARNGRHGHVFTKHGKINLRNEKFELDASPIDEGCQCPTCKHYSRAYIRHLFKAKEMLAMRLCVLHNLYFYNTLMEDIRNAIDADCFEEFKNEKLKAWAGKA.

Residue Asp-89 is the Proton acceptor of the active site. Residues 89–93 (DSGGF), Asp-143, Gln-194, and Gly-221 contribute to the substrate site. The tract at residues 252–258 (GVGTPSN) is RNA binding. The Nucleophile role is filled by Asp-271. The interval 276-280 (ARNGR) is RNA binding; important for wobble base 34 recognition. Zn(2+) is bound by residues Cys-309, Cys-311, Cys-314, and His-340.

The protein belongs to the queuine tRNA-ribosyltransferase family. In terms of assembly, homodimer. Within each dimer, one monomer is responsible for RNA recognition and catalysis, while the other monomer binds to the replacement base PreQ1. Zn(2+) is required as a cofactor.

It catalyses the reaction 7-aminomethyl-7-carbaguanine + guanosine(34) in tRNA = 7-aminomethyl-7-carbaguanosine(34) in tRNA + guanine. It participates in tRNA modification; tRNA-queuosine biosynthesis. In terms of biological role, catalyzes the base-exchange of a guanine (G) residue with the queuine precursor 7-aminomethyl-7-deazaguanine (PreQ1) at position 34 (anticodon wobble position) in tRNAs with GU(N) anticodons (tRNA-Asp, -Asn, -His and -Tyr). Catalysis occurs through a double-displacement mechanism. The nucleophile active site attacks the C1' of nucleotide 34 to detach the guanine base from the RNA, forming a covalent enzyme-RNA intermediate. The proton acceptor active site deprotonates the incoming PreQ1, allowing a nucleophilic attack on the C1' of the ribose to form the product. After dissociation, two additional enzymatic reactions on the tRNA convert PreQ1 to queuine (Q), resulting in the hypermodified nucleoside queuosine (7-(((4,5-cis-dihydroxy-2-cyclopenten-1-yl)amino)methyl)-7-deazaguanosine). In Clostridium acetobutylicum (strain ATCC 824 / DSM 792 / JCM 1419 / IAM 19013 / LMG 5710 / NBRC 13948 / NRRL B-527 / VKM B-1787 / 2291 / W), this protein is Queuine tRNA-ribosyltransferase.